An 866-amino-acid chain; its full sequence is Leucine--tRNA ligase (866 aa).

The 'HIGH' region motif lies at Pro42–His52. Residues Thr624–Ser628 carry the 'KMSKS' region motif. Lys627 provides a ligand contact to ATP.

It belongs to the class-I aminoacyl-tRNA synthetase family.

The protein localises to the cytoplasm. It carries out the reaction tRNA(Leu) + L-leucine + ATP = L-leucyl-tRNA(Leu) + AMP + diphosphate. The chain is Leucine--tRNA ligase from Nitrosospira multiformis (strain ATCC 25196 / NCIMB 11849 / C 71).